The following is a 185-amino-acid chain: Elongation factor P (185 aa).

Belongs to the elongation factor P family.

It is found in the cytoplasm. It functions in the pathway protein biosynthesis; polypeptide chain elongation. In terms of biological role, involved in peptide bond synthesis. Stimulates efficient translation and peptide-bond synthesis on native or reconstituted 70S ribosomes in vitro. Probably functions indirectly by altering the affinity of the ribosome for aminoacyl-tRNA, thus increasing their reactivity as acceptors for peptidyl transferase. In Bordetella petrii (strain ATCC BAA-461 / DSM 12804 / CCUG 43448), this protein is Elongation factor P.